The primary structure comprises 182 residues: N-alpha-acetyltransferase daf-31 (182 aa).

In terms of domain architecture, N-acetyltransferase spans 1–152 (MNIRCARVDD…DAYAMRRDLA (152 aa)). Residues 162–182 (PADREAYTTAKTTDDKKKNRS) form a disordered region.

The protein belongs to the acetyltransferase family. ARD1 subfamily. As to quaternary structure, component of the N-terminal acetyltransferase A (NatA) complex. In terms of tissue distribution, expressed in head and tail hypodermal cells, hypodermal seam cells, pharynx, intestine and head and tail neurons.

It catalyses the reaction N-terminal glycyl-[protein] + acetyl-CoA = N-terminal N(alpha)-acetylglycyl-[protein] + CoA + H(+). It carries out the reaction N-terminal L-alanyl-[protein] + acetyl-CoA = N-terminal N(alpha)-acetyl-L-alanyl-[protein] + CoA + H(+). The catalysed reaction is N-terminal L-seryl-[protein] + acetyl-CoA = N-terminal N(alpha)-acetyl-L-seryl-[protein] + CoA + H(+). The enzyme catalyses N-terminal L-valyl-[protein] + acetyl-CoA = N-terminal N(alpha)-acetyl-L-valyl-[protein] + CoA + H(+). It catalyses the reaction N-terminal L-cysteinyl-[protein] + acetyl-CoA = N-terminal N(alpha)-acetyl-L-cysteinyl-[protein] + CoA + H(+). It carries out the reaction N-terminal L-threonyl-[protein] + acetyl-CoA = N-terminal N(alpha)-acetyl-L-threonyl-[protein] + CoA + H(+). Its function is as follows. Catalytic subunit of the N-terminal acetyltransferase A (NatA) complex which displays alpha (N-terminal) acetyltransferase activity. Plays a role in regulating larval development, metabolism and longevity. Functions downstream or alongside daf-3, daf-12 and daf-16 in the dauer formation pathway. Functions upstream of daf-15 to enable animal development. The protein is N-alpha-acetyltransferase daf-31 of Caenorhabditis elegans.